Reading from the N-terminus, the 173-residue chain is Phosphopantetheine adenylyltransferase (173 aa).

Threonine 9 serves as a coordination point for substrate. ATP is bound by residues 9 to 10 (TF) and histidine 17. Lysine 41, threonine 75, and arginine 89 together coordinate substrate. ATP is bound by residues 90 to 92 (GLR), glutamate 100, and 125 to 131 (HIYLSSS).

Belongs to the bacterial CoaD family. Homohexamer. Mg(2+) serves as cofactor.

Its subcellular location is the cytoplasm. The catalysed reaction is (R)-4'-phosphopantetheine + ATP + H(+) = 3'-dephospho-CoA + diphosphate. It functions in the pathway cofactor biosynthesis; coenzyme A biosynthesis; CoA from (R)-pantothenate: step 4/5. Functionally, reversibly transfers an adenylyl group from ATP to 4'-phosphopantetheine, yielding dephospho-CoA (dPCoA) and pyrophosphate. This Methylacidiphilum infernorum (isolate V4) (Methylokorus infernorum (strain V4)) protein is Phosphopantetheine adenylyltransferase.